Here is a 431-residue protein sequence, read N- to C-terminus: Adenylosuccinate synthetase (431 aa).

Residues 12–18 (GDEGKGK) and 40–42 (GHT) contribute to the GTP site. Aspartate 13 acts as the Proton acceptor in catalysis. Mg(2+) is bound by residues aspartate 13 and glycine 40. IMP is bound by residues 13 to 16 (DEGK), 38 to 41 (NAGH), threonine 130, arginine 144, glutamine 224, threonine 239, and arginine 303. The active-site Proton donor is histidine 41. 299–305 (STTGRPR) contacts substrate. GTP is bound by residues arginine 305, 331–333 (KAD), and 413–415 (SIG).

The protein belongs to the adenylosuccinate synthetase family. Homodimer. It depends on Mg(2+) as a cofactor.

The protein resides in the cytoplasm. The catalysed reaction is IMP + L-aspartate + GTP = N(6)-(1,2-dicarboxyethyl)-AMP + GDP + phosphate + 2 H(+). It functions in the pathway purine metabolism; AMP biosynthesis via de novo pathway; AMP from IMP: step 1/2. In terms of biological role, plays an important role in the de novo pathway of purine nucleotide biosynthesis. Catalyzes the first committed step in the biosynthesis of AMP from IMP. The chain is Adenylosuccinate synthetase from Cytophaga hutchinsonii (strain ATCC 33406 / DSM 1761 / CIP 103989 / NBRC 15051 / NCIMB 9469 / D465).